A 351-amino-acid polypeptide reads, in one-letter code: MEKKQLKFIDLFAGIGGMRIPFEELGGKCVFSSEIDKHCQRTYEANFGEMPTGDITKLSADSIPYHDLLLAGFPCQAFSQGGRKQGFQDERGQLFFQVAKILNDHRPQAILLENVKGLRGHDKGRTLQMILYVLEKLNYVVSWKIISATDFNLPQKRERIFIVGFQDKNNKNLIFDFPKPIELTAKVGDLLEKEVDEKYTITDRMWEGHQNRKKAHRKRGNGFGFSLVNRNSSYTRTISARYYKDGSEVLVEQANKNPRVLTPRECARLQGFPESFVIPVSDCQAWRQFGNSVPVSVIRAIAQKMLSYIDLTEQQKEFKKVDLDQVITQKKKQLYPEDYQEQFIQKELALL.

One can recognise an SAM-dependent MTase C5-type domain in the interval 6–312 (LKFIDLFAGI…QKMLSYIDLT (307 aa)). Residue C75 is part of the active site.

Belongs to the class I-like SAM-binding methyltransferase superfamily. C5-methyltransferase family.

It carries out the reaction a 2'-deoxycytidine in DNA + S-adenosyl-L-methionine = a 5-methyl-2'-deoxycytidine in DNA + S-adenosyl-L-homocysteine + H(+). A methylase, recognizes the double-stranded sequence 5'-CCNGG-3', methylates C-2 on both strands, and protects the DNA from cleavage by the DsaV endonuclease. The polypeptide is Type II methyltransferase M.DsaV (Dactylococcopsis salina (Myxobaktron salinum)).